A 124-amino-acid chain; its full sequence is Small ribosomal subunit protein uS13 (124 aa).

Positions 94–124 (GLPLRGQRTKNNSRTRKGRRKTVANKKKATK) are disordered. The segment covering 100–124 (QRTKNNSRTRKGRRKTVANKKKATK) has biased composition (basic residues).

It belongs to the universal ribosomal protein uS13 family. As to quaternary structure, part of the 30S ribosomal subunit. Forms a loose heterodimer with protein S19. Forms two bridges to the 50S subunit in the 70S ribosome.

Functionally, located at the top of the head of the 30S subunit, it contacts several helices of the 16S rRNA. In the 70S ribosome it contacts the 23S rRNA (bridge B1a) and protein L5 of the 50S subunit (bridge B1b), connecting the 2 subunits; these bridges are implicated in subunit movement. Contacts the tRNAs in the A and P-sites. The polypeptide is Small ribosomal subunit protein uS13 (Christiangramia forsetii (strain DSM 17595 / CGMCC 1.15422 / KT0803) (Gramella forsetii)).